The primary structure comprises 543 residues: Chaperonin GroEL (543 aa).

ATP-binding positions include 29-32 (TLGP), 86-90 (DGTTT), glycine 413, 478-480 (DAL), and aspartate 494. The segment at 524 to 543 (PEPEAPAVPAGMPGGMGGMY) is disordered.

This sequence belongs to the chaperonin (HSP60) family. Forms a cylinder of 14 subunits composed of two heptameric rings stacked back-to-back. Interacts with the co-chaperonin GroES.

It is found in the cytoplasm. The catalysed reaction is ATP + H2O + a folded polypeptide = ADP + phosphate + an unfolded polypeptide.. Together with its co-chaperonin GroES, plays an essential role in assisting protein folding. The GroEL-GroES system forms a nano-cage that allows encapsulation of the non-native substrate proteins and provides a physical environment optimized to promote and accelerate protein folding. This chain is Chaperonin GroEL, found in Ruminiclostridium cellulolyticum (strain ATCC 35319 / DSM 5812 / JCM 6584 / H10) (Clostridium cellulolyticum).